Consider the following 182-residue polypeptide: RNA pyrophosphohydrolase (182 aa).

One can recognise a Nudix hydrolase domain in the interval Gly6–Asn149. The short motif at Gly38–Gly59 is the Nudix box element. Residues Pro162 to Glu182 form a disordered region.

The protein belongs to the Nudix hydrolase family. RppH subfamily. A divalent metal cation is required as a cofactor.

Accelerates the degradation of transcripts by removing pyrophosphate from the 5'-end of triphosphorylated RNA, leading to a more labile monophosphorylated state that can stimulate subsequent ribonuclease cleavage. In Dechloromonas aromatica (strain RCB), this protein is RNA pyrophosphohydrolase.